Consider the following 510-residue polypeptide: GMP synthase [glutamine-hydrolyzing] (510 aa).

The 191-residue stretch at 5-195 folds into the Glutamine amidotransferase type-1 domain; sequence LVLILDFGGQ…LYEVCHCQGD (191 aa). Cysteine 82 functions as the Nucleophile in the catalytic mechanism. Catalysis depends on residues histidine 169 and glutamate 171. The region spanning 196-385 is the GMPS ATP-PPase domain; that stretch reads WTMENYIEKE…LGVPEEIVWR (190 aa). Residue 223 to 229 participates in ATP binding; that stretch reads SGGVDSS.

As to quaternary structure, homodimer.

The enzyme catalyses XMP + L-glutamine + ATP + H2O = GMP + L-glutamate + AMP + diphosphate + 2 H(+). The protein operates within purine metabolism; GMP biosynthesis; GMP from XMP (L-Gln route): step 1/1. Functionally, catalyzes the synthesis of GMP from XMP. This is GMP synthase [glutamine-hydrolyzing] from Alkaliphilus metalliredigens (strain QYMF).